A 513-amino-acid polypeptide reads, in one-letter code: MTALTLSTAAASGLRADAIVVGVAKSPKGDKGLVVAPGAEAVDKGYDGKLAAVLETLGASGAEGEVTKLPAPSGFKAPVVVAVGLGAAPEDGQDKGTAFDAEALRRAAGAAARALAGAKKAAFALPVADAADAGTIGEGALLGAYSFDAYKENGRNAKNGKAPLAEVVLLGGKPRDKAFKAAVERAVAVTEELNRARDLINTPPNDLNPESFAAVAQAAAKEHGIKVQVLDEKALTKGGYGGILGVGAGSAAGPRLVKLSYTSSKAKKHLAFVGKGITYDSGGISLKPAGHNETMKCDMSGAAAVFAAVVAAARLGLEVNVTGWLALAENMPSGTATRPGDVLRMYSGKTVEVLNTDAEGRLVLADALWAASEEKPDAIVDVATLTGAMMLALGNRLFGVMANDDAFRTAVVEAAEEVGEDSWPMPLPEHLRKGMDSPTADIANMGERMGGGLVAGLFLREFVGEGITWAHLDIAGPAFNEAAPFGYTPKGGTGTAVRTLVRLAELTAAGDLG.

Mn(2+) contacts are provided by Lys275 and Asp280. Residue Lys287 is part of the active site. Mn(2+) contacts are provided by Asp298, Asp357, and Glu359. Residue Arg361 is part of the active site.

This sequence belongs to the peptidase M17 family. The cofactor is Mn(2+).

The protein resides in the cytoplasm. It carries out the reaction Release of an N-terminal amino acid, Xaa-|-Yaa-, in which Xaa is preferably Leu, but may be other amino acids including Pro although not Arg or Lys, and Yaa may be Pro. Amino acid amides and methyl esters are also readily hydrolyzed, but rates on arylamides are exceedingly low.. The enzyme catalyses Release of an N-terminal amino acid, preferentially leucine, but not glutamic or aspartic acids.. In terms of biological role, presumably involved in the processing and regular turnover of intracellular proteins. Catalyzes the removal of unsubstituted N-terminal amino acids from various peptides. This is Probable cytosol aminopeptidase from Streptomyces avermitilis (strain ATCC 31267 / DSM 46492 / JCM 5070 / NBRC 14893 / NCIMB 12804 / NRRL 8165 / MA-4680).